The following is a 540-amino-acid chain: Threonine--tRNA ligase catalytic subunit (540 aa).

Residues 134–428 (DHRIIGERLD…LLEHFRGKLP (295 aa)) are catalytic. Residues Cys226, His277, and His405 each coordinate Zn(2+).

The protein belongs to the class-II aminoacyl-tRNA synthetase family. As to quaternary structure, homodimer. Probably interacts with its editing subunit. It depends on Zn(2+) as a cofactor.

The protein localises to the cytoplasm. It catalyses the reaction tRNA(Thr) + L-threonine + ATP = L-threonyl-tRNA(Thr) + AMP + diphosphate + H(+). Functionally, catalyzes the attachment of threonine to tRNA(Thr) in a two-step reaction: L-threonine is first activated by ATP to form Thr-AMP and then transferred to the acceptor end of tRNA(Thr). Also activates L-serine and transfers it to tRNA(Thr) but cannot deacylate incorrectly charged amino acid; unlike most archaea the editing function is found in a freestanding protein. The chain is Threonine--tRNA ligase catalytic subunit from Sulfurisphaera tokodaii (strain DSM 16993 / JCM 10545 / NBRC 100140 / 7) (Sulfolobus tokodaii).